The primary structure comprises 529 residues: Glucose transporter 2A (529 aa).

Positions 1-22 are disordered; it reads MTERRDNVSHAPDAIEGPNDGA. Topologically, residues 1–43 are cytoplasmic; sequence MTERRDNVSHAPDAIEGPNDGAHAEDTSPGFFSFENLGVAQVQ. Residues 44-64 form a helical membrane-spanning segment; the sequence is VVGGTLNGFSIGFVAVYILLY. At 65–119 the chain is on the extracellular side; the sequence is EVATNCSLFKTTEACKAVGSYGCEWKDTEVCSWKKECDSDSDGVNPCESLIGYSS. A helical membrane pass occupies residues 120 to 140; the sequence is LYSGIFASAMIVGSMVGSIIA. Over 141–152 the chain is Cytoplasmic; the sequence is GKCITMFGLKKS. A helical transmembrane segment spans residues 153-173; it reads FIIVGVMSVVASALNHISVAT. Residues 174–175 are Extracellular-facing; sequence NE. Residues 176–196 form a helical membrane-spanning segment; that stretch reads FWVLCAGRVLMGIGLGVVCVI. Over 197–214 the chain is Cytoplasmic; the sequence is CPMYVNENAHPKLSKVDG. The chain crosses the membrane as a helical span at residues 215–235; sequence VLFQVFITFGIMLAAMLGLIL. The Extracellular segment spans residues 236–250; the sequence is DKTVNYDNDPDMAGR. A helical transmembrane segment spans residues 251–271; it reads FHGFCAVSSVLSVAMFLVGMF. Residues 272 to 300 lie on the Cytoplasmic side of the membrane; that stretch reads LRESTATFSQDDDGKADGGMDPNEYGWGQ. The helical transmembrane segment at 301-321 threads the bilayer; the sequence is MLWPLFMGAVTAGTLQLTGIN. The Extracellular portion of the chain corresponds to 322-339; the sequence is AVMNYAPKITENLGMDPS. The helical transmembrane segment at 340-360 threads the bilayer; it reads LGNFLVMAWNFVTSLVAIPLA. Topologically, residues 361 to 368 are cytoplasmic; it reads SRFTMRQM. A helical transmembrane segment spans residues 369–389; the sequence is FITCSFVASCMCLFLCGIPVF. Over 390–404 the chain is Extracellular; the sequence is PGVAEEKVKNGVATT. The helical transmembrane segment at 405–425 threads the bilayer; it reads GIALFIAAFEFGVGSCFFVLA. Residues 426-439 are Cytoplasmic-facing; sequence QDLFPPSFRPKGSS. Residues 440 to 460 traverse the membrane as a helical segment; the sequence is FVVMMQFIFNILINLLYPITT. Topologically, residues 461–476 are extracellular; sequence EAISGGATGDQDKGQA. The chain crosses the membrane as a helical span at residues 477–497; it reads VVFILFGLIGLICFVLQFFYL. Residues 498 to 529 lie on the Cytoplasmic side of the membrane; sequence YPYDANQDHENDHGTEPVERILSPVDVPTPRN. Residues 508 to 529 are disordered; that stretch reads NDHGTEPVERILSPVDVPTPRN.

It belongs to the major facilitator superfamily. Sugar transporter (TC 2.A.1.1) family.

It is found in the membrane. Its function is as follows. Facilitative glucose transporter. The chain is Glucose transporter 2A (THT2A) from Trypanosoma brucei brucei.